We begin with the raw amino-acid sequence, 1125 residues long: MNIDEELTTILKNNSNLKKMKEFLEQNIFFSLTGYEGFFKAFLIKKIKEYSKTGKIILIVKDEHTLDKIKNDLQVITNQIFELNYFSPLVYKGIGSKSTIFNERIKFLFNFYKKNPGIYITVLKSLLSKIPDKNTLLKNIYKIEKNTNINTADIEKTLITLGYEKTLRVTIPGEFTVKGEIIDIYPFGEQNPIRIALNFDKIEEIKKFNPLTQLKHDNEILEFQILPKKEIIWDDKTINTLKTKIKSVEYKKILEELDFKKETKTEEMFYPLVANTYLGDEIEKHTPIVNFEINNFEKEIEKIHQEYEKLYKEAEEAGKNIIDPKRILLNYKTFNLKSDVLFSKIKSLKSKETIEFKIESERNFFSNIALTKEEFENWLKNGFKIIIAAESESQKEKLKYIFKELPKVSIEVLKISSSLIIEKEKIAIILESNIFNTGQKINKAFESSKTKAIDSFVEIEKNSHVVHINHGIGIFRQIKRIKTSSLEKDYIEIEYAEGEKLFIPIEQTNLIQKYIGSDPKNIKLDKISSKTWIKNKANAKKRIEEIADKLIELYSKRESIKGIKYPEDNELQLLFESEFPYDETPDQIRAIKEIKEDMMSFKVMDRLLCGDVGFGKTEVAMRAAFKAVMGNKQVIVLSPTTILAEQHFNTFKKRFKNFPIKIEVLSRFIKNNAESRILKELKSGKIDIIIGTHKILSKKFTCKNLGLIIIDEEQRFGVKEKEKLKEIRISVDCLALSATPIPRSLHMSLIKLRDISVLKIPPQNRVKIEAYLESFSELLIKHAIESELSRDGQVFLVNHNIEELYYLKTLIERLTPYARIAIIHGKLTGEEIENIMHNFIKKAYQILLATTIIENGIDIPNANTIIINNANKFGLAQLYQLKGRVGRGSQKAYAYFLYQDSEKLNERSIERLRAITEFSELGAGFKIAMKDMEIRGVGNLLGREQHGEIESIGLDYYLTMLNKAIEKKMGKISSDEEEVDIKINYSGFIPENYAKNEQDKILIYKKIFKIQTEEESKKIRSELHNDFGPIPEEINSLLMLAELKILAKDLNITKLKEKNRALEIEYKNIESIPMEKIIEILQKHPNLLILNPSYQKSIFLSFKNIEKSEKINYIYKNINLLKTST.

In terms of domain architecture, Helicase ATP-binding spans 597–758 (DMMSFKVMDR…LIKLRDISVL (162 aa)). Residue 610–617 (GDVGFGKT) coordinates ATP. Positions 711–714 (DEEQ) match the DEEQ box motif. The Helicase C-terminal domain occupies 774–933 (SFSELLIKHA…GFKIAMKDME (160 aa)).

The protein in the N-terminal section; belongs to the UvrB family. This sequence in the C-terminal section; belongs to the helicase family. RecG subfamily.

It localises to the cytoplasm. Couples transcription and DNA repair by recognizing RNA polymerase (RNAP) stalled at DNA lesions. Mediates ATP-dependent release of RNAP and its truncated transcript from the DNA, and recruitment of nucleotide excision repair machinery to the damaged site. The polypeptide is Transcription-repair-coupling factor (Borreliella burgdorferi (strain ATCC 35210 / DSM 4680 / CIP 102532 / B31) (Borrelia burgdorferi)).